A 610-amino-acid polypeptide reads, in one-letter code: ATP-dependent zinc metalloprotease FtsH (610 aa).

Topologically, residues 1-3 (MAK) are cytoplasmic. Residues 4–24 (NLMLWLVIAVVLMSIFQNFSA) form a helical membrane-spanning segment. Topologically, residues 25-97 (NNINNRKIDY…IIGAAPEEQS (73 aa)) are extracellular. Residues 98 to 118 (FFTAIFISWFPMLLLIGVWVF) traverse the membrane as a helical segment. The Cytoplasmic segment spans residues 119–610 (FMRQMQVGGG…SNICTDDDNN (492 aa)). 192-199 (GPPGTGKT) contacts ATP. Residue His-414 participates in Zn(2+) binding. The active site involves Glu-415. Zn(2+) contacts are provided by His-418 and Asp-492.

It in the central section; belongs to the AAA ATPase family. This sequence in the C-terminal section; belongs to the peptidase M41 family. As to quaternary structure, homohexamer. It depends on Zn(2+) as a cofactor.

It localises to the cell membrane. Functionally, acts as a processive, ATP-dependent zinc metallopeptidase for both cytoplasmic and membrane proteins. Plays a role in the quality control of integral membrane proteins. This Buchnera aphidicola subsp. Baizongia pistaciae (strain Bp) protein is ATP-dependent zinc metalloprotease FtsH.